Here is a 404-residue protein sequence, read N- to C-terminus: Cysteine desulfurase IscS (404 aa).

Residues 75–76 (AT), asparagine 155, glutamine 183, and 203–205 (SGH) contribute to the pyridoxal 5'-phosphate site. N6-(pyridoxal phosphate)lysine is present on lysine 206. A pyridoxal 5'-phosphate-binding site is contributed by threonine 243. Catalysis depends on cysteine 328, which acts as the Cysteine persulfide intermediate. Residue cysteine 328 participates in [2Fe-2S] cluster binding.

Belongs to the class-V pyridoxal-phosphate-dependent aminotransferase family. NifS/IscS subfamily. In terms of assembly, homodimer. Forms a heterotetramer with IscU, interacts with other sulfur acceptors. It depends on pyridoxal 5'-phosphate as a cofactor.

The protein resides in the cytoplasm. The enzyme catalyses (sulfur carrier)-H + L-cysteine = (sulfur carrier)-SH + L-alanine. It functions in the pathway cofactor biosynthesis; iron-sulfur cluster biosynthesis. In terms of biological role, master enzyme that delivers sulfur to a number of partners involved in Fe-S cluster assembly, tRNA modification or cofactor biosynthesis. Catalyzes the removal of elemental sulfur atoms from cysteine to produce alanine. Functions as a sulfur delivery protein for Fe-S cluster synthesis onto IscU, an Fe-S scaffold assembly protein, as well as other S acceptor proteins. This is Cysteine desulfurase IscS from Shewanella halifaxensis (strain HAW-EB4).